The chain runs to 132 residues: Small ribosomal subunit protein uS8 (132 aa).

This sequence belongs to the universal ribosomal protein uS8 family. As to quaternary structure, part of the 30S ribosomal subunit. Contacts proteins S5 and S12.

In terms of biological role, one of the primary rRNA binding proteins, it binds directly to 16S rRNA central domain where it helps coordinate assembly of the platform of the 30S subunit. The polypeptide is Small ribosomal subunit protein uS8 (Limosilactobacillus reuteri (strain DSM 20016) (Lactobacillus reuteri)).